The chain runs to 153 residues: Ribosome maturation factor RimP (153 aa).

It belongs to the RimP family.

The protein resides in the cytoplasm. Its function is as follows. Required for maturation of 30S ribosomal subunits. This Rippkaea orientalis (strain PCC 8801 / RF-1) (Cyanothece sp. (strain PCC 8801)) protein is Ribosome maturation factor RimP.